We begin with the raw amino-acid sequence, 319 residues long: Cytochrome c biogenesis protein CcsA (319 aa).

7 helical membrane-spanning segments follow: residues 17-37 (TISI…LGGL), 44-64 (GMIV…ASSG), 68-88 (LSNL…LHTI), 143-163 (MLLS…ILII), 223-243 (VISL…VWAN), 257-271 (TWAF…IYLH), and 286-306 (VASI…LLGI).

It belongs to the CcmF/CycK/Ccl1/NrfE/CcsA family. In terms of assembly, may interact with Ccs1.

It localises to the plastid. The protein resides in the chloroplast thylakoid membrane. In terms of biological role, required during biogenesis of c-type cytochromes (cytochrome c6 and cytochrome f) at the step of heme attachment. This Lolium perenne (Perennial ryegrass) protein is Cytochrome c biogenesis protein CcsA.